The chain runs to 333 residues: tRNA dimethylallyltransferase (333 aa).

16 to 23 lines the ATP pocket; it reads GPTASGKT. 18-23 is a binding site for substrate; that stretch reads TASGKT. 3 interaction with substrate tRNA regions span residues 41–44, 165–169, and 253–258; these read DSAL, QRISR, and RCVGYR.

Belongs to the IPP transferase family. In terms of assembly, monomer. Requires Mg(2+) as cofactor.

It catalyses the reaction adenosine(37) in tRNA + dimethylallyl diphosphate = N(6)-dimethylallyladenosine(37) in tRNA + diphosphate. In terms of biological role, catalyzes the transfer of a dimethylallyl group onto the adenine at position 37 in tRNAs that read codons beginning with uridine, leading to the formation of N6-(dimethylallyl)adenosine (i(6)A). The chain is tRNA dimethylallyltransferase from Polaromonas sp. (strain JS666 / ATCC BAA-500).